The following is an 821-amino-acid chain: Calpain-3 (821 aa).

The disordered stretch occupies residues 1–37 (MPTVISPTVAPRTGAEPRSPGPVPHPAQGKTTEAGGG). Positions 74-417 (LYLDPEFPPD…FTKLEICNLT (344 aa)) constitute a Calpain catalytic domain. Catalysis depends on residues Cys-129, His-334, and Asn-358. Residues 418–586 (ADALESDKLQ…KRNLSEEAEN (169 aa)) are domain III. Residues 587–649 (TISVDRPVKK…RPGHTDQESE (63 aa)) form a linker region. The interval 603 to 651 (IFVSDRANSNKELGVDQEAEEGKDKTGPDKQGESPQPRPGHTDQESEEQ) is disordered. A compositionally biased stretch (basic and acidic residues) spans 622 to 634 (EEGKDKTGPDKQG). EF-hand domains lie at 649-683 (EEQQ…VVNK), 692-725 (FTLE…KKIK), 722-757 (KKIK…AGFH), and 787-821 (VRLE…TMYA). A domain IV region spans residues 650-820 (EQQQFRNIFR…VLEWLQLTMY (171 aa)). Positions 662, 665, 667, 672, 705, 707, 709, 711, 716, 735, 737, 739, 741, 746, 800, 802, 804, and 806 each coordinate Ca(2+).

This sequence belongs to the peptidase C2 family. In terms of assembly, homodimer; via EF-hand domain 4. Interacts with TTN/titin. Interacts with CMYA5; this interaction, which results in CMYA5 proteolysis, may protect CAPN3 from autolysis. Interacts with SIMC1. Interacts with UTP25; the interaction is required for CAPN3 translocation to the nucleolus. Skeletal muscle.

The protein resides in the cytoplasm. It localises to the nucleus. Its subcellular location is the nucleolus. It carries out the reaction Broad endopeptidase activity.. Its activity is regulated as follows. Activated by micromolar concentrations of calcium and inhibited by calpastatin. In terms of biological role, calcium-regulated non-lysosomal thiol-protease. Proteolytically cleaves CTBP1 at 'His-399'. Mediates, with UTP25, the proteasome-independent degradation of p53/TP53. This is Calpain-3 (Capn3) from Rattus norvegicus (Rat).